The chain runs to 111 residues: MSSAAHDNHGAGHGSLGSYAIGFVLSVILTAIPFYMVMDGGFSRHATILTMVVLGLVQVVVHLICFLHMNMSSEGRWNVMAFIFTVIVILLVVGLSLWIIFSADMLMMPMP.

The Cytoplasmic segment spans residues M1 to G17. The helical transmembrane segment at S18–M38 threads the bilayer. Topologically, residues D39–A46 are periplasmic. The helical transmembrane segment at T47–L67 threads the bilayer. The Cytoplasmic portion of the chain corresponds to H68–M80. Residues A81 to F101 traverse the membrane as a helical segment. The Periplasmic portion of the chain corresponds to S102–P111.

This sequence belongs to the cytochrome c oxidase bacterial subunit 4 family. As to quaternary structure, heterooctamer of two A chains, two B chains, two C chains and two D chains.

It localises to the cell inner membrane. Cytochrome bo(3) ubiquinol terminal oxidase is the component of the aerobic respiratory chain of E.coli that predominates when cells are grown at high aeration. Has proton pump activity across the membrane in addition to electron transfer, pumping 2 protons/electron. This chain is Cytochrome bo(3) ubiquinol oxidase subunit 4 (cyoD), found in Pseudomonas aeruginosa (strain ATCC 15692 / DSM 22644 / CIP 104116 / JCM 14847 / LMG 12228 / 1C / PRS 101 / PAO1).